Here is a 110-residue protein sequence, read N- to C-terminus: U1-lycotoxin-Ls1ii (110 aa).

The first 20 residues, 1 to 20 (MKFVLLFGVLLVTLFSYSSA), serve as a signal peptide directing secretion. A propeptide spanning residues 21-44 (EMLDDFDQADEDELLSLIEKEEAR) is cleaved from the precursor. Disulfide bonds link cysteine 47/cysteine 62, cysteine 54/cysteine 71, cysteine 61/cysteine 89, and cysteine 73/cysteine 87.

Belongs to the neurotoxin 19 (CSTX) family. 03 subfamily. Expressed by the venom gland.

The protein localises to the secreted. The sequence is that of U1-lycotoxin-Ls1ii from Lycosa singoriensis (Wolf spider).